The sequence spans 453 residues: Cytochrome b-c1 complex subunit 2, mitochondrial (453 aa).

A mitochondrion-targeting transit peptide spans 1–14 (MKLLTRAGSLSRFY). Residues Lys-66, Lys-199, and Lys-250 each carry the N6-acetyllysine modification.

The protein belongs to the peptidase M16 family. UQCRC2/QCR2 subfamily. In terms of assembly, component of the ubiquinol-cytochrome c oxidoreductase (cytochrome b-c1 complex, complex III, CIII), a multisubunit enzyme composed of 11 subunits. The complex is composed of 3 respiratory subunits cytochrome b, cytochrome c1 and Rieske protein UQCRFS1, 2 core protein subunits UQCRC1/QCR1 and UQCRC2/QCR2, and 6 low-molecular weight protein subunits UQCRH/QCR6, UQCRB/QCR7, UQCRQ/QCR8, UQCR10/QCR9, UQCR11/QCR10 and subunit 9, the cleavage product of Rieske protein UQCRFS1. The complex exists as an obligatory dimer and forms supercomplexes (SCs) in the inner mitochondrial membrane with NADH-ubiquinone oxidoreductase (complex I, CI) and cytochrome c oxidase (complex IV, CIV), resulting in different assemblies (supercomplex SCI(1)III(2)IV(1) and megacomplex MCI(2)III(2)IV(2)). Interacts with RAB5IF. Interacts with STMP1.

It localises to the mitochondrion inner membrane. In terms of biological role, component of the ubiquinol-cytochrome c oxidoreductase, a multisubunit transmembrane complex that is part of the mitochondrial electron transport chain which drives oxidative phosphorylation. The respiratory chain contains 3 multisubunit complexes succinate dehydrogenase (complex II, CII), ubiquinol-cytochrome c oxidoreductase (cytochrome b-c1 complex, complex III, CIII) and cytochrome c oxidase (complex IV, CIV), that cooperate to transfer electrons derived from NADH and succinate to molecular oxygen, creating an electrochemical gradient over the inner membrane that drives transmembrane transport and the ATP synthase. The cytochrome b-c1 complex catalyzes electron transfer from ubiquinol to cytochrome c, linking this redox reaction to translocation of protons across the mitochondrial inner membrane, with protons being carried across the membrane as hydrogens on the quinol. In the process called Q cycle, 2 protons are consumed from the matrix, 4 protons are released into the intermembrane space and 2 electrons are passed to cytochrome c. The 2 core subunits UQCRC1/QCR1 and UQCRC2/QCR2 are homologous to the 2 mitochondrial-processing peptidase (MPP) subunits beta-MPP and alpha-MPP respectively, and they seem to have preserved their MPP processing properties. May be involved in the in situ processing of UQCRFS1 into the mature Rieske protein and its mitochondrial targeting sequence (MTS)/subunit 9 when incorporated into complex III. This Bos taurus (Bovine) protein is Cytochrome b-c1 complex subunit 2, mitochondrial (UQCRC2).